The following is a 503-amino-acid chain: Cytochrome P450 3A15 (503 aa).

Cys442 provides a ligand contact to heme.

It belongs to the cytochrome P450 family. Heme serves as cofactor.

It is found in the endoplasmic reticulum membrane. The protein resides in the microsome membrane. It carries out the reaction an organic molecule + reduced [NADPH--hemoprotein reductase] + O2 = an alcohol + oxidized [NADPH--hemoprotein reductase] + H2O + H(+). Cytochromes P450 are a group of heme-thiolate monooxygenases. In liver microsomes, this enzyme is involved in an NADPH-dependent electron transport pathway. It oxidizes a variety of structurally unrelated compounds, including steroids, fatty acids, and xenobiotics. This chain is Cytochrome P450 3A15 (CYP3A15), found in Cavia porcellus (Guinea pig).